Consider the following 104-residue polypeptide: MSTFTLSDLEAIVAIRAKASPDESWTAKLVTAGQDKAAKKLGEEAIEAVMAAVKNDRANLIYESADLLYHLLVVLKIADIPIETVMEELQRRTAQSGLSEKASR.

It belongs to the PRA-PH family.

The protein localises to the cytoplasm. It catalyses the reaction 1-(5-phospho-beta-D-ribosyl)-ATP + H2O = 1-(5-phospho-beta-D-ribosyl)-5'-AMP + diphosphate + H(+). It participates in amino-acid biosynthesis; L-histidine biosynthesis; L-histidine from 5-phospho-alpha-D-ribose 1-diphosphate: step 2/9. The chain is Phosphoribosyl-ATP pyrophosphatase from Allorhizobium ampelinum (strain ATCC BAA-846 / DSM 112012 / S4) (Agrobacterium vitis (strain S4)).